The chain runs to 224 residues: UPF0758 protein Patl_0046 (224 aa).

Residues 102-224 form the MPN domain; the sequence is VFNSAQQTKH…AVSFAERGLI (123 aa). Zn(2+) contacts are provided by H173, H175, and D186. The JAMM motif motif lies at 173 to 186; it reads HNHPSGVAEPSQAD.

Belongs to the UPF0758 family.

In Pseudoalteromonas atlantica (strain T6c / ATCC BAA-1087), this protein is UPF0758 protein Patl_0046.